Here is a 306-residue protein sequence, read N- to C-terminus: Glutathione transport system permease protein GsiC (306 aa).

At 1–8 (MLNYVIKR) the chain is on the cytoplasmic side. The helical transmembrane segment at 9–29 (LLGLIPTLFIVSVLVFLFVHM) threads the bilayer. Residues 30 to 102 (LPGDPARLIA…SRFMPTLWLT (73 aa)) are Periplasmic-facing. The 198-residue stretch at 95–292 (FMPTLWLTIT…LEFILINLVV (198 aa)) folds into the ABC transmembrane type-1 domain. The chain crosses the membrane as a helical span at residues 103-123 (ITSMVWAVIFGMAAGIIAAVW). The Cytoplasmic portion of the chain corresponds to 124-134 (RNRWPDRLSMT). A helical membrane pass occupies residues 135–155 (IAVSGISFPAFALGMFLIQVF). Residues 156–168 (SVELGWLPTVGAD) lie on the Periplasmic side of the membrane. Residues 169–189 (SWQHYILPSLTLGAAVAAVMA) traverse the membrane as a helical segment. Over 190-228 (RFTRASFVDVLSEDYMRTARAKGVSETWVVLKHGLRNAM) the chain is Cytoplasmic. The chain crosses the membrane as a helical span at residues 229-249 (IPVVTMMGLQFGFLLGGSIVV). The Periplasmic portion of the chain corresponds to 250-277 (EKVFNWPGLGRLLVDSVEMRDYPVIQAE). Residues 278 to 298 (ILLFSLEFILINLVVDVLYAA) traverse the membrane as a helical segment. The Cytoplasmic portion of the chain corresponds to 299 to 306 (INPAIRYK).

The protein belongs to the binding-protein-dependent transport system permease family. In terms of assembly, the complex is composed of two ATP-binding proteins (GsiA), two transmembrane proteins (GsiC and GsiD) and a solute-binding protein (GsiB).

The protein localises to the cell inner membrane. In terms of biological role, part of the ABC transporter complex GsiABCD involved in glutathione import. Probably responsible for the translocation of the substrate across the membrane. The polypeptide is Glutathione transport system permease protein GsiC (Shigella flexneri serotype 5b (strain 8401)).